The following is a 217-amino-acid chain: Small ribosomal subunit protein uS2 (217 aa).

This sequence belongs to the universal ribosomal protein uS2 family.

The sequence is that of Small ribosomal subunit protein uS2 from Korarchaeum cryptofilum (strain OPF8).